A 141-amino-acid chain; its full sequence is Large ribosomal subunit protein uL11 (141 aa).

The protein belongs to the universal ribosomal protein uL11 family. Part of the ribosomal stalk of the 50S ribosomal subunit. Interacts with L10 and the large rRNA to form the base of the stalk. L10 forms an elongated spine to which L12 dimers bind in a sequential fashion forming a multimeric L10(L12)X complex. One or more lysine residues are methylated.

Forms part of the ribosomal stalk which helps the ribosome interact with GTP-bound translation factors. The protein is Large ribosomal subunit protein uL11 of Phytoplasma australiense.